The sequence spans 117 residues: Immunoglobulin kappa variable 1-12 (117 aa).

The signal sequence occupies residues 1 to 22 (MDMRVPAQLLGLLLLWFPGSRC). The tract at residues 23–45 (DIQMTQSPSSVSASVGDRVTITC) is framework-1. Residues 24 to 117 (IQMTQSPSSV…YYCQQANSFP (94 aa)) enclose the Ig-like domain. Cysteines 45 and 110 form a disulfide. The tract at residues 46-56 (RASQGISSWLA) is complementarity-determining-1. The segment at 57-71 (WYQQKPGKAPKLLIY) is framework-2. The segment at 72 to 78 (AASSLQS) is complementarity-determining-2. The segment at 79 to 110 (GVPSRFSGSGSGTDFTLTISSLQPEDFATYYC) is framework-3. Positions 111–117 (QQANSFP) are complementarity-determining-3.

Immunoglobulins are composed of two identical heavy chains and two identical light chains; disulfide-linked.

It localises to the secreted. It is found in the cell membrane. In terms of biological role, v region of the variable domain of immunoglobulin light chains that participates in the antigen recognition. Immunoglobulins, also known as antibodies, are membrane-bound or secreted glycoproteins produced by B lymphocytes. In the recognition phase of humoral immunity, the membrane-bound immunoglobulins serve as receptors which, upon binding of a specific antigen, trigger the clonal expansion and differentiation of B lymphocytes into immunoglobulins-secreting plasma cells. Secreted immunoglobulins mediate the effector phase of humoral immunity, which results in the elimination of bound antigens. The antigen binding site is formed by the variable domain of one heavy chain, together with that of its associated light chain. Thus, each immunoglobulin has two antigen binding sites with remarkable affinity for a particular antigen. The variable domains are assembled by a process called V-(D)-J rearrangement and can then be subjected to somatic hypermutations which, after exposure to antigen and selection, allow affinity maturation for a particular antigen. This Homo sapiens (Human) protein is Immunoglobulin kappa variable 1-12.